The sequence spans 425 residues: Malate transporter MleP (425 aa).

11 helical membrane passes run 11–31, 35–55, 65–85, 96–116, 134–154, 196–216, 246–266, 269–289, 310–330, 339–359, and 401–421; these read GISL…TLLG, LDMV…YFIG, LGGG…FHIV, FMGG…CGSI, IALI…MLIG, IFSQ…IGAL, IKLD…LLMA, ILNK…IVFI, VIMT…LIDL, WQFV…SWFL, and FAQM…GILI.

Belongs to the 2-hydroxycarboxylate transporter (2-HCT) (TC 2.A.24) family.

Its subcellular location is the cell membrane. It carries out the reaction (S)-lactate(in) + (S)-malate(out) = (S)-lactate(out) + (S)-malate(in). The enzyme catalyses (R)-lactate(in) + (S)-malate(out) = (R)-lactate(out) + (S)-malate(in). It catalyses the reaction glycolate(in) + (S)-malate(out) = glycolate(out) + (S)-malate(in). In terms of biological role, secondary transporter involved in malolactic fermentation. Catalyzes the uptake of divalent malate into the cell coupled to the exit of monovalent lactate, a product of malate degradation (precursor/product exchange). The malate/lactate exchange is electrogenic and results in the generation of a membrane potential. Is highly selective for the S-enantiomer of malate. In the absence of lactate, MleP can also catalyze the proton-dependent transport of malate. In vitro, transports a range of substrates that contain the 2-hydroxycarboxylate motif, HO-CR(2)-COO(-), with a preference for malate, lactate and glycolate. Modification of the OH or the COO(-) groups of the 2-hydroxycarboxylate motif drastically reduces the affinity of the transporter for the substrates, indicating their relevance in substrate recognition. Significant activity is also observed with some 2-oxocarboxylates. Transports only poorly citromalate. Citrate binds to MleP but is not translocated. The sequence is that of Malate transporter MleP from Lactococcus lactis subsp. lactis (strain IL1403) (Streptococcus lactis).